The sequence spans 1159 residues: WASH complex subunit 5 (1159 aa).

Belongs to the strumpellin family. As to quaternary structure, component of the WASH complex.

The protein localises to the early endosome. Functionally, acts at least in part as component of the WASH complex which seems to regulate washc1 nucleation-promoting factor (NPF) activity and is required for its membrane targeting during endosomal sorting. The protein is WASH complex subunit 5 of Xenopus tropicalis (Western clawed frog).